We begin with the raw amino-acid sequence, 86 residues long: Neurotoxin homolog NL1 (86 aa).

A signal peptide spans 1 to 21 (MKTLLLTLVVVTMVCMDLGYT). 4 cysteine pairs are disulfide-bonded: Cys24–Cys45, Cys38–Cys62, Cys66–Cys78, and Cys79–Cys84.

This sequence belongs to the three-finger toxin family. Short-chain subfamily. Orphan group VIII (haditoxin) sub-subfamily. Homodimer; non-covalently linked. As to expression, expressed by the venom gland.

It is found in the secreted. Functionally, antagonist of muscle and neuronal nicotinic acetylcholine receptors (nAChR) with highest affinity for neuronal alpha-7/CHRNA7 nAChRs. This chain is Neurotoxin homolog NL1, found in Naja atra (Chinese cobra).